A 285-amino-acid polypeptide reads, in one-letter code: Protein pxr1 (285 aa).

Positions 1–11 (MGLAAPRKKIK) are enriched in basic residues. Positions 1-23 (MGLAAPRKKIKISHDPNNTNWSR) are disordered. One can recognise a G-patch domain in the interval 25-79 (TSGFGHKILSSQGWTPGSFLGARNAAHAEMFTAASASHIKVVLKDDTLGLGARPK). A disordered region spans residues 144–263 (TPIVTEEPQG…MGRHVFRGRH (120 aa)). Residues 152–163 (QGIHKDKQEDKL) show a composition bias toward basic and acidic residues. The segment covering 190–208 (KKKKSKSKNHREKKDRKRK) has biased composition (basic residues). Positions 224 to 234 (RSTEKKSKATR) are enriched in basic and acidic residues. Over residues 254–263 (MGRHVFRGRH) the composition is skewed to basic residues.

The protein belongs to the PINX1 family.

The protein localises to the nucleus. The protein resides in the nucleolus. Its function is as follows. Involved in rRNA-processing at A0, A1 and A2 sites and negatively regulates telomerase. This is Protein pxr1 (pxr1) from Aspergillus niger (strain ATCC MYA-4892 / CBS 513.88 / FGSC A1513).